Here is a 210-residue protein sequence, read N- to C-terminus: Putative tyrosine-protein phosphatase OCA1 (210 aa).

In terms of domain architecture, Tyrosine-protein phosphatase spans 44 to 204 (NFCPVERYLY…EIDREKAPNW (161 aa)). The active-site Phosphocysteine intermediate is the cysteine 140.

Belongs to the protein-tyrosine phosphatase family.

It is found in the cytoplasm. The catalysed reaction is O-phospho-L-tyrosyl-[protein] + H2O = L-tyrosyl-[protein] + phosphate. Functionally, putative tyrosine-protein phosphatase required for protection against superoxide stress. This chain is Putative tyrosine-protein phosphatase OCA1 (OCA1), found in Kluyveromyces lactis (strain ATCC 8585 / CBS 2359 / DSM 70799 / NBRC 1267 / NRRL Y-1140 / WM37) (Yeast).